The chain runs to 111 residues: Small ribosomal subunit protein bS16 (111 aa).

The protein belongs to the bacterial ribosomal protein bS16 family.

This is Small ribosomal subunit protein bS16 from Rickettsia bellii (strain OSU 85-389).